A 247-amino-acid polypeptide reads, in one-letter code: DNA polymerase sliding clamp 1 (247 aa).

The protein belongs to the PCNA family. As to quaternary structure, heterotrimer. The subunits circularize to form a toroid; DNA passes through its center. Replication factor C (RFC) is required to load the toroid on the DNA.

In terms of biological role, sliding clamp subunit that acts as a moving platform for DNA processing. Responsible for tethering the catalytic subunit of DNA polymerase and other proteins to DNA during high-speed replication. The polypeptide is DNA polymerase sliding clamp 1 (Aeropyrum pernix (strain ATCC 700893 / DSM 11879 / JCM 9820 / NBRC 100138 / K1)).